Here is a 179-residue protein sequence, read N- to C-terminus: ATP synthase subunit b (179 aa).

A helical membrane pass occupies residues 26 to 46; that stretch reads FLEANLFNLAILLGIIIYYAP.

This sequence belongs to the ATPase B chain family. F-type ATPases have 2 components, F(1) - the catalytic core - and F(0) - the membrane proton channel. F(1) has five subunits: alpha(3), beta(3), gamma(1), delta(1), epsilon(1). F(0) has four main subunits: a(1), b(1), b'(1) and c(10-14). The alpha and beta chains form an alternating ring which encloses part of the gamma chain. F(1) is attached to F(0) by a central stalk formed by the gamma and epsilon chains, while a peripheral stalk is formed by the delta, b and b' chains.

Its subcellular location is the cellular thylakoid membrane. Functionally, f(1)F(0) ATP synthase produces ATP from ADP in the presence of a proton or sodium gradient. F-type ATPases consist of two structural domains, F(1) containing the extramembraneous catalytic core and F(0) containing the membrane proton channel, linked together by a central stalk and a peripheral stalk. During catalysis, ATP synthesis in the catalytic domain of F(1) is coupled via a rotary mechanism of the central stalk subunits to proton translocation. Its function is as follows. Component of the F(0) channel, it forms part of the peripheral stalk, linking F(1) to F(0). This is ATP synthase subunit b from Synechocystis sp. (strain ATCC 27184 / PCC 6803 / Kazusa).